The primary structure comprises 313 residues: tRNA uridine(34) hydroxylase (313 aa).

The 99-residue stretch at 127 to 225 (SDPDTILIDT…YLETVPEEES (99 aa)) folds into the Rhodanese domain. Residue Cys185 is the Cysteine persulfide intermediate of the active site.

This sequence belongs to the TrhO family.

The enzyme catalyses uridine(34) in tRNA + AH2 + O2 = 5-hydroxyuridine(34) in tRNA + A + H2O. Functionally, catalyzes oxygen-dependent 5-hydroxyuridine (ho5U) modification at position 34 in tRNAs. The protein is tRNA uridine(34) hydroxylase of Gluconobacter oxydans (strain 621H) (Gluconobacter suboxydans).